A 1435-amino-acid chain; its full sequence is Gag-Pol polyprotein (1435 aa).

Gly2 is lipidated: N-myristoyl glycine; by host. The segment at 7–31 (VLSGGKLDSWEKIRLRPGGRKKYKL) is interaction with Gp41. The interval 8–43 (LSGGKLDSWEKIRLRPGGRKKYKLKHIVWASRELGR) is interaction with host CALM1. The interval 12 to 19 (KLDSWEKI) is interaction with host AP3D1. Residues 14–33 (DSWEKIRLRPGGRKKYKLKH) are interaction with membrane phosphatidylinositol 4,5-bisphosphate and RNA. The Nuclear export signal motif lies at 16–22 (WEKIRLR). A Nuclear localization signal motif is present at residues 26–32 (RKKYKLK). The interaction with membrane phosphatidylinositol 4,5-bisphosphate stretch occupies residues 72–76 (EELRS). Positions 107–126 (QKNSQQEIQQAAKNEGNSNP) are disordered. Over residues 108–126 (KNSQQEIQQAAKNEGNSNP) the composition is skewed to polar residues. Tyr131 carries the post-translational modification Phosphotyrosine; by host. Residues 188–226 (NTVGGHQAAMQMLKDTINDEAAEWDRIHPQQAGPIPPGQ) are interaction with human PPIA/CYPA and NUP153. Positions 276–362 (YSPVSILDIR…GGPSHKARVL (87 aa)) are dimerization/Multimerization of capsid protein p24. CCHC-type zinc fingers lie at residues 391–408 (IKCFNCGKEGHLARNCRA) and 412–429 (KGCWKCGKEGHQMKECTE). The disordered stretch occupies residues 444–478 (GEARKLSPEQDRANSPTSRELRIRRGDSPLPEAGA). A compositionally biased stretch (basic and acidic residues) spans 445–455 (EARKLSPEQDR). The dimerization of protease stretch occupies residues 489-493 (PQITL). The 70-residue stretch at 508–577 (IEALLDTGAD…TPINIIGRNM (70 aa)) folds into the Peptidase A2 domain. Asp513 (for protease activity; shared with dimeric partner) is an active-site residue. Dimerization of protease stretches follow at residues 537–543 (GIGGFIK) and 576–588 (NMLTQIGCTLNFP). The 191-residue stretch at 631–821 (EGKISKIGPE…PPFLWMGYEL (191 aa)) folds into the Reverse transcriptase domain. Mg(2+) is bound by residues Asp697, Asp772, and Asp773. Residues 814-822 (FLWMGYELH) form an RT 'primer grip' region. The short motif at 985-1001 (WEVWWTEYWQAAWIPEW) is the Tryptophan repeat motif element. Residues 1021-1144 (IPGAETYYVD…VDKLVSSGIR (124 aa)) form the RNase H type-1 domain. Asp1030, Glu1065, Asp1085, and Asp1136 together coordinate Mg(2+). The segment at 1150–1191 (DGIDKAQEEHERYHSNWRAMASDFNLPPVVAKEIVASCDKCQ) adopts an Integrase-type zinc-finger fold. Residues His1159, His1163, Cys1187, and Cys1190 each contribute to the Zn(2+) site. An Integrase catalytic domain is found at 1201–1351 (VDCSPGIWQL…SAGERIIDII (151 aa)). Asp1211, Asp1263, and Glu1299 together coordinate Mg(2+). Positions 1370–1417 (FRVYYRDSRDPIWKGPAKLLWKGEGAVVIQDNNEIKVVPRRKAKILKD) form a DNA-binding region, integrase-type.

In terms of assembly, homotrimer; further assembles as hexamers of trimers. Interacts with gp41 (via C-terminus). Interacts with host CALM1; this interaction induces a conformational change in the Matrix protein, triggering exposure of the myristate group. Interacts with host AP3D1; this interaction allows the polyprotein trafficking to multivesicular bodies during virus assembly. Part of the pre-integration complex (PIC) which is composed of viral genome, matrix protein, Vpr and integrase. As to quaternary structure, homodimer; the homodimer further multimerizes as homohexamers or homopentamers. Interacts with human PPIA/CYPA; This interaction stabilizes the capsid. Interacts with human NUP153. Interacts with host PDZD8; this interaction stabilizes the capsid. Interacts with monkey TRIM5; this interaction destabilizes the capsid. Homodimer, whose active site consists of two apposed aspartic acid residues. In terms of assembly, heterodimer of p66 RT and p51 RT (RT p66/p51). Heterodimerization of RT is essential for DNA polymerase activity. The overall folding of the subdomains is similar in p66 RT and p51 RT but the spatial arrangements of the subdomains are dramatically different. As to quaternary structure, homotetramer; may further associate as a homohexadecamer. Part of the pre-integration complex (PIC) which is composed of viral genome, matrix protein, Vpr and integrase. Interacts with human SMARCB1/INI1 and human PSIP1/LEDGF isoform 1. Interacts with human KPNA3; this interaction might play a role in nuclear import of the pre-integration complex. Interacts with human NUP153; this interaction might play a role in nuclear import of the pre-integration complex. The cofactor is Mg(2+). Post-translationally, specific enzymatic cleavages by the viral protease yield mature proteins. The protease is released by autocatalytic cleavage. The polyprotein is cleaved during and after budding, this process is termed maturation. Proteolytic cleavage of p66 RT removes the RNase H domain to yield the p51 RT subunit. Nucleocapsid protein p7 might be further cleaved after virus entry. Tyrosine phosphorylated presumably in the virion by a host kinase. Phosphorylation is apparently not a major regulator of membrane association. In terms of processing, phosphorylated possibly by host MAPK1; this phosphorylation is necessary for Pin1-mediated virion uncoating. Post-translationally, methylated by host PRMT6, impairing its function by reducing RNA annealing and the initiation of reverse transcription.

The protein resides in the host cell membrane. Its subcellular location is the host endosome. The protein localises to the host multivesicular body. It is found in the virion membrane. It localises to the host nucleus. The protein resides in the host cytoplasm. Its subcellular location is the virion. It carries out the reaction Specific for a P1 residue that is hydrophobic, and P1' variable, but often Pro.. The enzyme catalyses Endohydrolysis of RNA in RNA/DNA hybrids. Three different cleavage modes: 1. sequence-specific internal cleavage of RNA. Human immunodeficiency virus type 1 and Moloney murine leukemia virus enzymes prefer to cleave the RNA strand one nucleotide away from the RNA-DNA junction. 2. RNA 5'-end directed cleavage 13-19 nucleotides from the RNA end. 3. DNA 3'-end directed cleavage 15-20 nucleotides away from the primer terminus.. It catalyses the reaction 3'-end directed exonucleolytic cleavage of viral RNA-DNA hybrid.. The catalysed reaction is DNA(n) + a 2'-deoxyribonucleoside 5'-triphosphate = DNA(n+1) + diphosphate. Its activity is regulated as follows. Protease: The viral protease is inhibited by many synthetic protease inhibitors (PIs), such as amprenavir, atazanavir, indinavir, loprinavir, nelfinavir, ritonavir and saquinavir. Use of protease inhibitors in tritherapy regimens permit more ambitious therapeutic strategies. Reverse transcriptase/ribonuclease H: RT can be inhibited either by nucleoside RT inhibitors (NRTIs) or by non nucleoside RT inhibitors (NNRTIs). NRTIs act as chain terminators, whereas NNRTIs inhibit DNA polymerization by binding a small hydrophobic pocket near the RT active site and inducing an allosteric change in this region. Classical NRTIs are abacavir, adefovir (PMEA), didanosine (ddI), lamivudine (3TC), stavudine (d4T), tenofovir (PMPA), zalcitabine (ddC), and zidovudine (AZT). Classical NNRTIs are atevirdine (BHAP U-87201E), delavirdine, efavirenz (DMP-266), emivirine (I-EBU), and nevirapine (BI-RG-587). The tritherapies used as a basic effective treatment of AIDS associate two NRTIs and one NNRTI. Its function is as follows. Mediates, with Gag polyprotein, the essential events in virion assembly, including binding the plasma membrane, making the protein-protein interactions necessary to create spherical particles, recruiting the viral Env proteins, and packaging the genomic RNA via direct interactions with the RNA packaging sequence (Psi). Gag-Pol polyprotein may regulate its own translation, by the binding genomic RNA in the 5'-UTR. At low concentration, the polyprotein would promote translation, whereas at high concentration, the polyprotein would encapsidate genomic RNA and then shut off translation. Functionally, targets the polyprotein to the plasma membrane via a multipartite membrane-binding signal, that includes its myristoylated N-terminus. Matrix protein is part of the pre-integration complex. Implicated in the release from host cell mediated by Vpu. Binds to RNA. In terms of biological role, forms the conical core that encapsulates the genomic RNA-nucleocapsid complex in the virion. Most core are conical, with only 7% tubular. The core is constituted by capsid protein hexamer subunits. The core is disassembled soon after virion entry. Host restriction factors such as TRIM5-alpha or TRIMCyp bind retroviral capsids and cause premature capsid disassembly, leading to blocks in reverse transcription. Capsid restriction by TRIM5 is one of the factors which restricts HIV-1 to the human species. Host PIN1 apparently facilitates the virion uncoating. On the other hand, interactions with PDZD8 or CYPA stabilize the capsid. Encapsulates and protects viral dimeric unspliced genomic RNA (gRNA). Binds these RNAs through its zinc fingers. Acts as a nucleic acid chaperone which is involved in rearangement of nucleic acid secondary structure during gRNA retrotranscription. Also facilitates template switch leading to recombination. As part of the polyprotein, participates in gRNA dimerization, packaging, tRNA incorporation and virion assembly. Its function is as follows. Aspartyl protease that mediates proteolytic cleavages of Gag and Gag-Pol polyproteins during or shortly after the release of the virion from the plasma membrane. Cleavages take place as an ordered, step-wise cascade to yield mature proteins. This process is called maturation. Displays maximal activity during the budding process just prior to particle release from the cell. Also cleaves Nef and Vif, probably concomitantly with viral structural proteins on maturation of virus particles. Hydrolyzes host EIF4GI and PABP1 in order to shut off the capped cellular mRNA translation. The resulting inhibition of cellular protein synthesis serves to ensure maximal viral gene expression and to evade host immune response. Also mediates cleavage of host YTHDF3. Mediates cleavage of host CARD8, thereby activating the CARD8 inflammasome, leading to the clearance of latent HIV-1 in patient CD4(+) T-cells after viral reactivation; in contrast, HIV-1 can evade CARD8-sensing when its protease remains inactive in infected cells prior to viral budding. Functionally, multifunctional enzyme that converts the viral RNA genome into dsDNA in the cytoplasm, shortly after virus entry into the cell. This enzyme displays a DNA polymerase activity that can copy either DNA or RNA templates, and a ribonuclease H (RNase H) activity that cleaves the RNA strand of RNA-DNA heteroduplexes in a partially processive 3' to 5' endonucleasic mode. Conversion of viral genomic RNA into dsDNA requires many steps. A tRNA(3)-Lys binds to the primer-binding site (PBS) situated at the 5'-end of the viral RNA. RT uses the 3' end of the tRNA primer to perform a short round of RNA-dependent minus-strand DNA synthesis. The reading proceeds through the U5 region and ends after the repeated (R) region which is present at both ends of viral RNA. The portion of the RNA-DNA heteroduplex is digested by the RNase H, resulting in a ssDNA product attached to the tRNA primer. This ssDNA/tRNA hybridizes with the identical R region situated at the 3' end of viral RNA. This template exchange, known as minus-strand DNA strong stop transfer, can be either intra- or intermolecular. RT uses the 3' end of this newly synthesized short ssDNA to perform the RNA-dependent minus-strand DNA synthesis of the whole template. RNase H digests the RNA template except for two polypurine tracts (PPTs) situated at the 5'-end and near the center of the genome. It is not clear if both polymerase and RNase H activities are simultaneous. RNase H probably can proceed both in a polymerase-dependent (RNA cut into small fragments by the same RT performing DNA synthesis) and a polymerase-independent mode (cleavage of remaining RNA fragments by free RTs). Secondly, RT performs DNA-directed plus-strand DNA synthesis using the PPTs that have not been removed by RNase H as primers. PPTs and tRNA primers are then removed by RNase H. The 3' and 5' ssDNA PBS regions hybridize to form a circular dsDNA intermediate. Strand displacement synthesis by RT to the PBS and PPT ends produces a blunt ended, linear dsDNA copy of the viral genome that includes long terminal repeats (LTRs) at both ends. In terms of biological role, catalyzes viral DNA integration into the host chromosome, by performing a series of DNA cutting and joining reactions. This enzyme activity takes place after virion entry into a cell and reverse transcription of the RNA genome in dsDNA. The first step in the integration process is 3' processing. This step requires a complex comprising the viral genome, matrix protein, Vpr and integrase. This complex is called the pre-integration complex (PIC). The integrase protein removes 2 nucleotides from each 3' end of the viral DNA, leaving recessed CA OH's at the 3' ends. In the second step, the PIC enters cell nucleus. This process is mediated through integrase and Vpr proteins, and allows the virus to infect a non dividing cell. This ability to enter the nucleus is specific of lentiviruses, other retroviruses cannot and rely on cell division to access cell chromosomes. In the third step, termed strand transfer, the integrase protein joins the previously processed 3' ends to the 5' ends of strands of target cellular DNA at the site of integration. The 5'-ends are produced by integrase-catalyzed staggered cuts, 5 bp apart. A Y-shaped, gapped, recombination intermediate results, with the 5'-ends of the viral DNA strands and the 3' ends of target DNA strands remaining unjoined, flanking a gap of 5 bp. The last step is viral DNA integration into host chromosome. This involves host DNA repair synthesis in which the 5 bp gaps between the unjoined strands are filled in and then ligated. Since this process occurs at both cuts flanking the HIV genome, a 5 bp duplication of host DNA is produced at the ends of HIV-1 integration. Alternatively, Integrase may catalyze the excision of viral DNA just after strand transfer, this is termed disintegration. In Human immunodeficiency virus type 1 group M subtype G (isolate 92NG083) (HIV-1), this protein is Gag-Pol polyprotein (gag-pol).